The sequence spans 123 residues: Small ribosomal subunit protein uS12 (123 aa).

Asp-89 carries the 3-methylthioaspartic acid modification.

Belongs to the universal ribosomal protein uS12 family. Part of the 30S ribosomal subunit. Contacts proteins S8 and S17. May interact with IF1 in the 30S initiation complex.

Its function is as follows. With S4 and S5 plays an important role in translational accuracy. In terms of biological role, interacts with and stabilizes bases of the 16S rRNA that are involved in tRNA selection in the A site and with the mRNA backbone. Located at the interface of the 30S and 50S subunits, it traverses the body of the 30S subunit contacting proteins on the other side and probably holding the rRNA structure together. The combined cluster of proteins S8, S12 and S17 appears to hold together the shoulder and platform of the 30S subunit. This chain is Small ribosomal subunit protein uS12, found in Geotalea uraniireducens (strain Rf4) (Geobacter uraniireducens).